A 60-amino-acid polypeptide reads, in one-letter code: Large ribosomal subunit protein bL32 (60 aa).

The interval 1 to 60 (MAVQQNKKTPSKRGMHRSHDFLVAPQLSVEQTTGETHMRHHISPNGFYRGRKVLKTKNDE) is disordered. Residues 49-60 (RGRKVLKTKNDE) show a composition bias toward basic residues.

The protein belongs to the bacterial ribosomal protein bL32 family.

This Herminiimonas arsenicoxydans protein is Large ribosomal subunit protein bL32.